A 66-amino-acid polypeptide reads, in one-letter code: Beta-mammal toxin Cv1 (66 aa).

Residues 1–66 (KEGYIVNLST…VWPLPKKTCN (66 aa)) enclose the LCN-type CS-alpha/beta domain. Cystine bridges form between Cys12-Cys65, Cys16-Cys41, Cys25-Cys46, and Cys29-Cys48.

In terms of tissue distribution, expressed by the venom gland.

The protein localises to the secreted. Its activity is regulated as follows. Is susceptible to be neutralized by human antibodies scFvs 10FG2 and HV. Its function is as follows. Beta toxins bind voltage-independently at site-4 of sodium channels (Nav) and reduces peak current and shifts the voltage of activation toward more negative potentials thereby affecting sodium channel activation and promoting spontaneous and repetitive firing. This toxin is slightly toxic to mice. The protein is Beta-mammal toxin Cv1 of Centruroides villegasi (Scorpion).